We begin with the raw amino-acid sequence, 84 residues long: Large ribosomal subunit protein bL31B (84 aa).

The protein belongs to the bacterial ribosomal protein bL31 family. Type B subfamily. Part of the 50S ribosomal subunit.

The protein is Large ribosomal subunit protein bL31B of Streptomyces griseus subsp. griseus (strain JCM 4626 / CBS 651.72 / NBRC 13350 / KCC S-0626 / ISP 5235).